Consider the following 510-residue polypeptide: Cytochrome P450 94B1 (510 aa).

The chain crosses the membrane as a helical span at residues 3–23 (MLNAIILILFPIIGFVLIFSF). Cys-450 is a binding site for heme.

Belongs to the cytochrome P450 family. The cofactor is heme.

The protein resides in the membrane. It carries out the reaction a jasmonyl-L-amino acid + reduced [NADPH--hemoprotein reductase] + O2 = a 12-hydroxyjasmonyl-L-alpha-amino acid + oxidized [NADPH--hemoprotein reductase] + H2O + H(+). Hydroxylase involved in the oxidation of the plant hormone jasmonoyl-L-isoleucine (JA-Ile), a bioactive phytohormone of the jasmonate-mediated signaling pathway. Converts JA-Ile to 12-hydroxy-JA-Ile. This Arabidopsis thaliana (Mouse-ear cress) protein is Cytochrome P450 94B1.